The following is a 447-amino-acid chain: Probable arabinosyltransferase ARAD1 (447 aa).

At 1–6 (MARKSS) the chain is on the cytoplasmic side. The chain crosses the membrane as a helical; Signal-anchor for type II membrane protein span at residues 7-29 (LLKRAAIAVVSVIAIYVILNASV). Residues 30–447 (SRSLPSSSDL…TNQTGLITSI (418 aa)) are Lumenal-facing. Low complexity predominate over residues 32-41 (SLPSSSDLPR). A disordered region spans residues 32 to 52 (SLPSSSDLPRQLIREDDDDEG). 3 N-linked (GlcNAc...) asparagine glycosylation sites follow: asparagine 427, asparagine 432, and asparagine 439.

Belongs to the glycosyltransferase 47 family. As to quaternary structure, homodimer and heterodimer with ARAD2. Expressed in root vasculature, cotyledons, leaves, stems, vascular tissue of sepals, petals and stamens, pollen grains, mature siliques and abscission region of seeds.

Its subcellular location is the golgi apparatus membrane. In terms of biological role, probable arabinosyl transferase responsible for the polymerization of arabinose into the arabinan of arabinogalactan. May function as inverting enzyme using UDP-beta-L-arabinopyranoside. May be important for arabinan side chains of rhamnogalacturonan I (RG-I), a major component of pectins. Cell wall pectic arabinans are involved in thigmomorphogenesis response of inflorescence stems to mechanical stress. The sequence is that of Probable arabinosyltransferase ARAD1 (ARAD1) from Arabidopsis thaliana (Mouse-ear cress).